Consider the following 415-residue polypeptide: Tyrosine--tRNA ligase (415 aa).

Residues 54 to 63 carry the 'HIGH' region motif; it reads PTGSNIHLGH. Residues 248–252 carry the 'KMSKS' region motif; that stretch reads KMSKT. Residue K251 coordinates ATP. One can recognise an S4 RNA-binding domain in the interval 351–415; sequence AKAFYLMSAV…GKKTFRRLTA (65 aa).

It belongs to the class-I aminoacyl-tRNA synthetase family. TyrS type 2 subfamily. In terms of assembly, homodimer.

Its subcellular location is the cytoplasm. It carries out the reaction tRNA(Tyr) + L-tyrosine + ATP = L-tyrosyl-tRNA(Tyr) + AMP + diphosphate + H(+). Catalyzes the attachment of tyrosine to tRNA(Tyr) in a two-step reaction: tyrosine is first activated by ATP to form Tyr-AMP and then transferred to the acceptor end of tRNA(Tyr). The chain is Tyrosine--tRNA ligase from Synechococcus sp. (strain CC9902).